A 329-amino-acid chain; its full sequence is MAGKLMHALQYNSYGGGAAGLEHVQVPVPTPKSNEVCLKLEATSLNPVDWKIQKGMIRPFLPRKFPCIPATDVAGEVVEVGSGVKNFKAGDKVVAVLSHLGGGGLAEFAVATEKLTVKRPQEVGAAEAAALPVAGLTALQALTNPAGLKLDGTGKKANILVTAASGGVGHYAVQLAKLANAHVTATCGARNIEFVKSLGADEVLDYKTPEGAALKSPSGKKYDAVVHCANGIPFSVFEPNLSENGKVIDITPGPNAMWTYAVKKITMSKKQLVPLLLIPKAENLEFMVNLVKEGKVKTVIDSKHPLSKAEDAWAKSIDGHATGKIIVEP.

R58 serves as a coordination point for substrate.

It belongs to the zinc-containing alcohol dehydrogenase family. Quinone oxidoreductase subfamily. In terms of assembly, homodimer or homotetramer. Transition to monomer upon NADPH binding. Interacts with calmodulin. Interacts with HP30-1, HP30-2 and HP20.

Its subcellular location is the plastid. It is found in the chloroplast inner membrane. NADPH-dependent alpha,beta-unsaturated oxoene reductase reducing the double bond of medium-chain (C9) to long-chain (C18) reactive electrophile species deriving from poly-unsaturated fatty acid peroxides. The best substrates are 13-lipoxygenase-derived gamma-ketols, but is unable to reduce the double bond of short-chain alkenals and alkenones such as acrolein, crotonaldehyde, 3-buten-2-one, 4-hexen-3-one and trans-2-hexenal, or quinones such as duroquinone, decylubiquinone, coenzyme Q0, menadione, menaquinone and phylloquinone. Can use trans-2-nonenal, trans-3-decen-2-one, 4-hydroxynonenal, 12-oxo-10(E) dodecanoate (traumatin), 4-oxononenal, trans-1,3 diphenyl-2-propenone, trans-1,4-diphenyl-2-butene-1,4-dione, 9-oxo-12,13-epoxy-(10E)-octadecenoic acid (trans-EKODE-1b), 9-hydroxy-12-oxo-10(E)-octadecenoic acid, 9-Hydroxy-12-oxo-10(E),15(Z)-octadecadienoic acid and 9,13-dihydroxy-10-oxo-11-octadecenoic acid as substrates, but has no activity with 13(R,S)-hydroperoxy-9(Z),11(E)-octadecadienoic acid (13-HPOD), 9(S),12(S),13(S)-trihydroxy-10(E)-octadecenoic acid, 13-hydroxy-12-oxo-9(Z)-octadecenoic acid, 9-oxo-10(E),12(Z)-octadecadienoic acid (9-KODE), 13-oxo-9(Z),11(E)-octadecadienoic acid (13-KODE) and 12-oxo-10,15(Z)-phytodienoic acid (12-OPDA). In Arabidopsis thaliana (Mouse-ear cress), this protein is Chloroplast envelope quinone oxidoreductase homolog.